We begin with the raw amino-acid sequence, 225 residues long: uncharacterized protein (225 aa).

The N-terminal stretch at 1–22 (MLQHYSVSWKKGLAALCLLAVA) is a signal peptide. Positions 161–190 (GNLTAAEEKKTGCLVCLDSCPVGIVSNATY) constitute a 4Fe-4S ferredoxin-type domain.

This is an uncharacterized protein from Escherichia coli (strain K12).